Consider the following 345-residue polypeptide: Protein GAMETE CELL DEFECTIVE 1, mitochondrial (345 aa).

A mitochondrion-targeting transit peptide spans 1–43 (MLALRKTLLHGRLPAAPPAAAAAAIASRIPALLRRLSSSPGDG). Positions 36–82 (LSSSPGDGQGGDEWGSSWSTGITKEHFDGSDAAVGRPVTSPSKPVSP) are disordered.

Its subcellular location is the mitochondrion. Its function is as follows. Essential for fertility (male and female gametophyte functions and development). Required for the integrity of female gametic mitochondria. Involved in embryo apical-basal patterning, and particularly dorsal-ventral patterning, during early embryogenesis, and endosperm free nucleus positioning and development as well as early endosperm development, probably by modulating the expression pattern of related genes (e.g. AL1, MYB3/AL2, CYP78A13/GE, PNH1, HAZ1, MPK6 and OSH1). Has function in triggering of endosperm programmed cell death (PCD) leading to syncytial endosperm cellularization and starchy endosperm cell maturation. Implicated in central vacuole dynamics necessary for microspore development leading to pollen production, and for pollen development and germination. In Oryza sativa subsp. indica (Rice), this protein is Protein GAMETE CELL DEFECTIVE 1, mitochondrial.